The primary structure comprises 297 residues: Esterase LipU (297 aa).

Active-site residues include Ser140, Glu239, and His269.

The protein belongs to the 'GDXG' lipolytic enzyme family.

It localises to the secreted. It catalyses the reaction a fatty acid ester + H2O = an aliphatic alcohol + a fatty acid + H(+). The catalysed reaction is a butanoate ester + H2O = an aliphatic alcohol + butanoate + H(+). The enzyme catalyses an acetyl ester + H2O = an aliphatic alcohol + acetate + H(+). It carries out the reaction decanoate ester + H2O = decanoate + an aliphatic alcohol + H(+). It catalyses the reaction an octanoate ester + H2O = an aliphatic alcohol + octanoate + H(+). The catalysed reaction is a dodecanoate ester + H2O = an aliphatic alcohol + dodecanoate + H(+). The enzyme catalyses hexadecanoate ester + H2O = an aliphatic alcohol + hexadecanoate + H(+). Inhibited by the ionic detergent SDS and by the serine protease inhibitor PMSF. Inhibited by the FDA approved drugs Diosmin, Acarbose and Ouabain. These drugs remain bound in the active site pocket and could be probable drug candidates to combat TB disease. Functionally, esterase that shows preference for short chain fatty acids. Contributes to the growth of M.tuberculosis during the nutritive stress. Elicits strong humoral response in both extrapulmonary and relapsed cases of tuberculosis patients. The chain is Esterase LipU from Mycobacterium tuberculosis (strain ATCC 25618 / H37Rv).